The following is a 381-amino-acid chain: Succinyl-diaminopimelate desuccinylase (381 aa).

H72 provides a ligand contact to Zn(2+). Residue D74 is part of the active site. D103 lines the Zn(2+) pocket. E133 functions as the Proton acceptor in the catalytic mechanism. Residues E134, E163, and H348 each contribute to the Zn(2+) site.

The protein belongs to the peptidase M20A family. DapE subfamily. As to quaternary structure, homodimer. Requires Zn(2+) as cofactor. It depends on Co(2+) as a cofactor.

The catalysed reaction is N-succinyl-(2S,6S)-2,6-diaminopimelate + H2O = (2S,6S)-2,6-diaminopimelate + succinate. It functions in the pathway amino-acid biosynthesis; L-lysine biosynthesis via DAP pathway; LL-2,6-diaminopimelate from (S)-tetrahydrodipicolinate (succinylase route): step 3/3. In terms of biological role, catalyzes the hydrolysis of N-succinyl-L,L-diaminopimelic acid (SDAP), forming succinate and LL-2,6-diaminopimelate (DAP), an intermediate involved in the bacterial biosynthesis of lysine and meso-diaminopimelic acid, an essential component of bacterial cell walls. The protein is Succinyl-diaminopimelate desuccinylase of Anaplasma marginale (strain Florida).